The primary structure comprises 39 residues: Beta-theraphotoxin-Cm2a (39 aa).

3 cysteine pairs are disulfide-bonded: Cys7–Cys21, Cys14–Cys26, and Cys20–Cys33. Phe39 carries the phenylalanine amide modification.

Expressed by the venom gland.

The protein localises to the secreted. Its function is as follows. Inhibits mammalian voltage-gated sodium channel subtypes Nav1.5/SCN5A and Nav1.8/SCN10A by shifting the voltage dependence of channel activation to more depolarized potentials and by blocking the inward component of the sodium current. In vivo, this toxin causes erect, elevated tail, initial partial ataxia, followed by recovery over approximately 1 hour after injection and the progressive development of shaking. Although paralysis subsides, the body tremors never cease and persist until the end of the experiment. The protein is Beta-theraphotoxin-Cm2a of Ceratogyrus marshalli (Straighthorned baboon tarantula).